Consider the following 181-residue polypeptide: UPF0200 protein Ta0179 (181 aa).

6–13 serves as a coordination point for ATP; sequence GMPGAGKD.

This sequence belongs to the UPF0200 family.

The protein is UPF0200 protein Ta0179 of Thermoplasma acidophilum (strain ATCC 25905 / DSM 1728 / JCM 9062 / NBRC 15155 / AMRC-C165).